Reading from the N-terminus, the 135-residue chain is Class I hydrophobin 15 (135 aa).

An N-terminal signal peptide occupies residues 1–21 (MFAKSATIAIVLAALAGFSAA). Intrachain disulfides connect Cys-50-Cys-113, Cys-57-Cys-107, Cys-58-Cys-97, and Cys-114-Cys-127. Asn-131 carries N-linked (GlcNAc...) asparagine glycosylation.

This sequence belongs to the fungal hydrophobin family. As to quaternary structure, self-assembles to form functional amyloid fibrils called rodlets. Self-assembly into fibrillar rodlets occurs spontaneously at hydrophobic:hydrophilic interfaces and the rodlets further associate laterally to form amphipathic monolayers.

The protein resides in the secreted. It is found in the cell wall. Its function is as follows. Aerial growth, conidiation, and dispersal of filamentous fungi in the environment rely upon a capability of their secreting small amphipathic proteins called hydrophobins (HPBs) with low sequence identity. Class I can self-assemble into an outermost layer of rodlet bundles on aerial cell surfaces, conferring cellular hydrophobicity that supports fungal growth, development and dispersal; whereas Class II form highly ordered films at water-air interfaces through intermolecular interactions but contribute nothing to the rodlet structure. This Pleurotus ostreatus (strain PC15) (Oyster mushroom) protein is Class I hydrophobin 15.